Here is a 429-residue protein sequence, read N- to C-terminus: Enolase (429 aa).

Q163 contributes to the (2R)-2-phosphoglycerate binding site. E205 (proton donor) is an active-site residue. Residues D242, E287, and D314 each coordinate Mg(2+). (2R)-2-phosphoglycerate contacts are provided by K339, R368, S369, and K390. Catalysis depends on K339, which acts as the Proton acceptor.

Belongs to the enolase family. It depends on Mg(2+) as a cofactor.

The protein resides in the cytoplasm. The protein localises to the secreted. Its subcellular location is the cell surface. It catalyses the reaction (2R)-2-phosphoglycerate = phosphoenolpyruvate + H2O. The protein operates within carbohydrate degradation; glycolysis; pyruvate from D-glyceraldehyde 3-phosphate: step 4/5. Catalyzes the reversible conversion of 2-phosphoglycerate (2-PG) into phosphoenolpyruvate (PEP). It is essential for the degradation of carbohydrates via glycolysis. The chain is Enolase from Anaeromyxobacter dehalogenans (strain 2CP-C).